We begin with the raw amino-acid sequence, 598 residues long: Phenylalanine--tRNA ligase beta subunit, cytoplasmic (598 aa).

The region spanning Leu-303–Thr-383 is the B5 domain. Residues Asp-361, Asp-367, Glu-370, and Asp-371 each coordinate Mg(2+).

It belongs to the phenylalanyl-tRNA synthetase beta subunit family. Type 2 subfamily. As to quaternary structure, tetramer of two alpha and two beta subunits. Mg(2+) serves as cofactor.

It is found in the cytoplasm. Its subcellular location is the cytosol. It carries out the reaction tRNA(Phe) + L-phenylalanine + ATP = L-phenylalanyl-tRNA(Phe) + AMP + diphosphate + H(+). The polypeptide is Phenylalanine--tRNA ligase beta subunit, cytoplasmic (Arabidopsis thaliana (Mouse-ear cress)).